We begin with the raw amino-acid sequence, 96 residues long: Co-chaperonin GroES (96 aa).

The protein belongs to the GroES chaperonin family. As to quaternary structure, heptamer of 7 subunits arranged in a ring. Interacts with the chaperonin GroEL.

The protein localises to the cytoplasm. Together with the chaperonin GroEL, plays an essential role in assisting protein folding. The GroEL-GroES system forms a nano-cage that allows encapsulation of the non-native substrate proteins and provides a physical environment optimized to promote and accelerate protein folding. GroES binds to the apical surface of the GroEL ring, thereby capping the opening of the GroEL channel. This Geobacter sp. (strain M21) protein is Co-chaperonin GroES.